Reading from the N-terminus, the 396-residue chain is Multidrug efflux protein YfmO (396 aa).

12 consecutive transmembrane segments (helical) span residues 20 to 40 (VWAV…VDPI), 56 to 76 (SLLF…SGAI), 80 to 100 (IGAK…AGLG), 114 to 134 (GGWG…IVGV), 142 to 162 (AIIL…LAGG), 171 to 191 (APFF…SFML), 214 to 234 (GLLT…ILLA), 249 to 269 (YVFF…APLV), 278 to 298 (SLVV…IWTD), 301 to 321 (TLII…NTIM), 339 to 359 (AYSS…GMLS), and 364 to 384 (ASTP…VLLM).

This sequence belongs to the major facilitator superfamily.

It is found in the cell membrane. Functionally, acts to efflux copper or a copper complex. It is possible that YfmO could contribute to copper resistance. This chain is Multidrug efflux protein YfmO (yfmO), found in Bacillus subtilis (strain 168).